The sequence spans 119 residues: Large ribosomal subunit protein bL20 (119 aa).

This sequence belongs to the bacterial ribosomal protein bL20 family.

Its function is as follows. Binds directly to 23S ribosomal RNA and is necessary for the in vitro assembly process of the 50S ribosomal subunit. It is not involved in the protein synthesizing functions of that subunit. This is Large ribosomal subunit protein bL20 from Xylella fastidiosa (strain M12).